A 508-amino-acid polypeptide reads, in one-letter code: Protein NODULATION SIGNALING PATHWAY 2 (508 aa).

Positions 75–98 (ITTTTTTTTTTDEEEEEMETTTTT) are disordered. One can recognise a GRAS domain in the interval 108–500 (VGDDSKGLKL…RRLLSASLWT (393 aa)). A leucine repeat I (LRI) region spans residues 115-190 (LKLVHLLMAG…NNHHHHNNNK (76 aa)). A VHIID region spans residues 209 to 273 (FQLLQDMSPY…NNGPHLRITA (65 aa)). The VHIID signature appears at 240–244 (VHVID). A leucine repeat II (LRII) region spans residues 289–321 (ETGRRLTSFAASLGQPFSFHHCRLDSDETFRPS). The tract at residues 331–422 (LVFNCMLNLP…RVFFGPRIAG (92 aa)) is PFYRE. The SAW stretch occupies residues 425 to 500 (GRIYRTGGEE…RRLLSASLWT (76 aa)).

It belongs to the GRAS family. Interacts with RAM1. Interacts with IPN2 and RAD1. In terms of tissue distribution, expressed in roots, shoots and leaves.

The protein resides in the nucleus membrane. Its subcellular location is the endoplasmic reticulum. Its function is as follows. Transcriptional regulator essential for Nod-factor-induced gene expression. Acts downstream of calcium spiking and DMI3, a calcium/calmodulin-dependent protein kinase (CCaMK). Transcription factor involved in the control of strigolactone biosynthesis in roots through the activation of the beta-carotene isomerase D27, which participates in a pathway leading to biosynthesis of strigolactones. The chain is Protein NODULATION SIGNALING PATHWAY 2 from Medicago truncatula (Barrel medic).